The sequence spans 306 residues: Probable dimethyladenosine transferase (306 aa).

S-adenosyl-L-methionine contacts are provided by H30, L32, G57, E78, D106, and N121.

Belongs to the class I-like SAM-binding methyltransferase superfamily. rRNA adenine N(6)-methyltransferase family. As to quaternary structure, part of the small subunit (SSU) processome, composed of more than 70 proteins and the RNA chaperone small nucleolar RNA (snoRNA) U3.

The protein resides in the nucleus. It is found in the nucleolus. The enzyme catalyses adenosine(1779)/adenosine(1780) in 18S rRNA + 4 S-adenosyl-L-methionine = N(6)-dimethyladenosine(1779)/N(6)-dimethyladenosine(1780) in 18S rRNA + 4 S-adenosyl-L-homocysteine + 4 H(+). Its function is as follows. Specifically dimethylates two adjacent adenosines in the loop of a conserved hairpin near the 3'-end of 18S rRNA in the 40S particle. Involved in the pre-rRNA processing steps leading to small-subunit rRNA production independently of its RNA-modifying catalytic activity. Part of the small subunit (SSU) processome, first precursor of the small eukaryotic ribosomal subunit. During the assembly of the SSU processome in the nucleolus, many ribosome biogenesis factors, an RNA chaperone and ribosomal proteins associate with the nascent pre-rRNA and work in concert to generate RNA folding, modifications, rearrangements and cleavage as well as targeted degradation of pre-ribosomal RNA by the RNA exosome. This chain is Probable dimethyladenosine transferase, found in Drosophila melanogaster (Fruit fly).